The sequence spans 478 residues: MKHAIKHIHFIGLGGAGMSGIAEVLHNLGYVISGSDLSDSATLQRLAGLGIQTFVGHAAANLVDVDAVVTSTAVHADNPEVLAAREKHIPVVPRALMLAELMRFKQGIAIAGTHGKTTTTSLVASVLAEGGLDPTFVIGGRLNSAGANAKLGSGDYIVVEADESDASFLNLLPVMAVVTNIDADHMETYGHDFGNLKKAFVDFLRRMPFYGTAILCTDDPVVRQIVPEMSCPITSYGLNEEAQVRAINVRAVGAQMHFTAQRRNGVKLPDLDVVLNLAGQHNVLNALAAIAVAVELNVPDAAVQKALSDFTGVGRRFQSYGELPARDGGRFTVIEDYGHHPVEVAATLSAARGAFPGRRLVLAFQPHRYSRTRDCFEDFVKVISSHADAVLLAEVYAAGETPIVAADGRSLARALRVAGKVEPVFVDSIHDMPQAIVDAAQDGDIVMCMGAGSIGLVPAKVVAMLQFQEVNVLEGQCA.

An ATP-binding site is contributed by 112–118; the sequence is GTHGKTT.

This sequence belongs to the MurCDEF family.

The protein resides in the cytoplasm. The catalysed reaction is UDP-N-acetyl-alpha-D-muramate + L-alanine + ATP = UDP-N-acetyl-alpha-D-muramoyl-L-alanine + ADP + phosphate + H(+). It participates in cell wall biogenesis; peptidoglycan biosynthesis. Functionally, cell wall formation. The protein is UDP-N-acetylmuramate--L-alanine ligase of Polaromonas naphthalenivorans (strain CJ2).